The chain runs to 387 residues: Patatin-11 (387 aa).

The first 23 residues, 1–23, serve as a signal peptide directing secretion; the sequence is MATTKSVLVLIFMILATTSSTFA. Residues 32–230 enclose the PNPLA domain; it reads LSTDGGGIKG…TVGDPALLSL (199 aa). The GXGXXG signature appears at 36 to 41; it reads GGGIKG. The GXSXG signature appears at 75-79; it reads GTSTG. The Nucleophile role is filled by Ser77. N-linked (GlcNAc...) asparagine glycosylation is present at Asn115. Asp216 acts as the Proton acceptor in catalysis. Positions 216-218 match the DGA/G motif; sequence DGG. Residues 322–385 are a coiled coil; that stretch reads ENALNGTTTE…DRKKLRANKA (64 aa). Asn326 is a glycosylation site (N-linked (GlcNAc...) asparagine).

This sequence belongs to the patatin family. In terms of tissue distribution, tuber.

The protein localises to the vacuole. Its function is as follows. Probable lipolytic acyl hydrolase (LAH), an activity which is thought to be involved in the response of tubers to pathogens. In Solanum tuberosum (Potato), this protein is Patatin-11.